Here is a 345-residue protein sequence, read N- to C-terminus: Anthranilate phosphoribosyltransferase (345 aa).

5-phospho-alpha-D-ribose 1-diphosphate is bound by residues Gly84, 87–88, Thr92, 94–97, 112–120, and Ser124; these read GD, NIST, and KHGGRGVSS. Gly84 provides a ligand contact to anthranilate. Mg(2+) is bound at residue Ser96. Residue Arg170 participates in anthranilate binding. Mg(2+) is bound by residues Asp229 and Glu230.

Belongs to the anthranilate phosphoribosyltransferase family. In terms of assembly, homodimer. The cofactor is Mg(2+).

The enzyme catalyses N-(5-phospho-beta-D-ribosyl)anthranilate + diphosphate = 5-phospho-alpha-D-ribose 1-diphosphate + anthranilate. Its pathway is amino-acid biosynthesis; L-tryptophan biosynthesis; L-tryptophan from chorismate: step 2/5. Functionally, catalyzes the transfer of the phosphoribosyl group of 5-phosphorylribose-1-pyrophosphate (PRPP) to anthranilate to yield N-(5'-phosphoribosyl)-anthranilate (PRA). The polypeptide is Anthranilate phosphoribosyltransferase (Paracidovorax citrulli (strain AAC00-1) (Acidovorax citrulli)).